A 299-amino-acid polypeptide reads, in one-letter code: MSEPIDLSQIAPTLKAEILAEALPYIRRYHGKTVVIKYGGNAMTEERLKQGFARDVILLKLVGINPVIVHGGGPQIDQALKKIGKAGTFIQGMRVTDEETMEVVEWVLGGEVQQDIVTLINHFGGHAVGLTGKDGGLIHARKLLMPDRDNPGQYIDIGQVGEVEAINPAVVKALQDDAFIPVISPIGFGEDGLSYNINADLVAGKLATVLNAEKLLMMTNIPGVMDKDGNLLTDLSAREIDALFEDGTISGGMLPKISSALDAAKSGVKSVHIVDGRIEHSVLLEILTEQPFGTMIRSH.

Substrate-binding positions include 72–73, arginine 94, and asparagine 196; that span reads GG.

This sequence belongs to the acetylglutamate kinase family. ArgB subfamily.

Its subcellular location is the cytoplasm. The catalysed reaction is N-acetyl-L-glutamate + ATP = N-acetyl-L-glutamyl 5-phosphate + ADP. The protein operates within amino-acid biosynthesis; L-arginine biosynthesis; N(2)-acetyl-L-ornithine from L-glutamate: step 2/4. Catalyzes the ATP-dependent phosphorylation of N-acetyl-L-glutamate. The chain is Acetylglutamate kinase from Burkholderia ambifaria (strain MC40-6).